The primary structure comprises 670 residues: Mannosyl-oligosaccharide alpha-1,2-mannosidase IA (670 aa).

The Cytoplasmic portion of the chain corresponds to 1–30 (MTGILPTYQRFVNGVPVPSISRRSFRLREK). The helical; Signal-anchor for type II membrane protein transmembrane segment at 31–51 (YLIVSVLLTFGIVWLGALFYL) threads the bilayer. Residues 52–670 (PEFKSSNSVN…EPAHAQNNRI (619 aa)) lie on the Lumenal side of the membrane. N61 carries N-linked (GlcNAc...) asparagine glycosylation. The tract at residues 135–177 (DVAPSVSSSRGPSKPPVDAIEEPAVGNNAANKDVSPSGPKAES) is disordered. C480 and C512 are joined by a disulfide. Residue E526 is the Proton donor of the active site. Ca(2+) is bound at residue T637.

The protein belongs to the glycosyl hydrolase 47 family. Ca(2+) serves as cofactor. N-glycosylated. Contains high mannose-type oligosaccharides.

It is found in the golgi apparatus membrane. The catalysed reaction is N(4)-(alpha-D-Man-(1-&gt;2)-alpha-D-Man-(1-&gt;2)-alpha-D-Man-(1-&gt;3)-[alpha-D-Man-(1-&gt;2)-alpha-D-Man-(1-&gt;3)-[alpha-D-Man-(1-&gt;2)-alpha-D-Man-(1-&gt;6)]-alpha-D-Man-(1-&gt;6)]-beta-D-Man-(1-&gt;4)-beta-D-GlcNAc-(1-&gt;4)-beta-D-GlcNAc)-L-asparaginyl-[protein] (N-glucan mannose isomer 9A1,2,3B1,2,3) + 4 H2O = N(4)-(alpha-D-Man-(1-&gt;3)-[alpha-D-Man-(1-&gt;3)-[alpha-D-Man-(1-&gt;6)]-alpha-D-Man-(1-&gt;6)]-beta-D-Man-(1-&gt;4)-beta-D-GlcNAc-(1-&gt;4)-beta-D-GlcNAc)-L-asparaginyl-[protein] (N-glucan mannose isomer 5A1,2) + 4 beta-D-mannose. The enzyme catalyses N(4)-(alpha-D-Man-(1-&gt;2)-alpha-D-Man-(1-&gt;2)-alpha-D-Man-(1-&gt;3)-[alpha-D-Man-(1-&gt;3)-[alpha-D-Man-(1-&gt;2)-alpha-D-Man-(1-&gt;6)]-alpha-D-Man-(1-&gt;6)]-beta-D-Man-(1-&gt;4)-beta-D-GlcNAc-(1-&gt;4)-beta-D-GlcNAc)-L-asparaginyl-[protein] (N-glucan mannose isomer 8A1,2,3B1,3) + 3 H2O = N(4)-(alpha-D-Man-(1-&gt;3)-[alpha-D-Man-(1-&gt;3)-[alpha-D-Man-(1-&gt;6)]-alpha-D-Man-(1-&gt;6)]-beta-D-Man-(1-&gt;4)-beta-D-GlcNAc-(1-&gt;4)-beta-D-GlcNAc)-L-asparaginyl-[protein] (N-glucan mannose isomer 5A1,2) + 3 beta-D-mannose. The protein operates within protein modification; protein glycosylation. With respect to regulation, strongly inhibited by 1-deoxymannojirimycin, an inhibitor of class I alpha-mannosidases, and by EDTA. EDTA inhibition is reversed by the addition of calcium, but not of magnesium. In terms of biological role, involved in the maturation of Asn-linked oligosaccharides. Converts Man(9)GlcNAc(2) to Man(5)GlcNAc(2) primarily through the Man(7)GlcNAc(2) isomer C processing intermediate. The chain is Mannosyl-oligosaccharide alpha-1,2-mannosidase IA from Spodoptera frugiperda (Fall armyworm).